A 144-amino-acid polypeptide reads, in one-letter code: MPNTARWAVTLTLTATAVCGPLAGASLATPNAAASGLYAPSALVLTTGHGQSAATATPERAVTLNCAPTASGTHPAAVSACAELRATGGDFDALSARSDAMCTRQYDPVVVTVEGVWQGKRVAYERTFANECVKNSYGTTVFTF.

The signal sequence occupies residues 1–34 (MPNTARWAVTLTLTATAVCGPLAGASLATPNAAA). 2 disulfide bridges follow: C66–C81 and C102–C132.

This sequence belongs to the protease inhibitor I16 (SSI) family. As to quaternary structure, homodimer.

It localises to the secreted. Its function is as follows. Strong inhibitor of bacterial serine proteases such as subtilisin. This is Probable subtilase-type protease inhibitor (sti1) from Streptomyces avermitilis (strain ATCC 31267 / DSM 46492 / JCM 5070 / NBRC 14893 / NCIMB 12804 / NRRL 8165 / MA-4680).